The following is a 289-amino-acid chain: Formamidopyrimidine-DNA glycosylase (289 aa).

The Schiff-base intermediate with DNA role is filled by proline 2. The active-site Proton donor is glutamate 3. Lysine 61 functions as the Proton donor; for beta-elimination activity in the catalytic mechanism. DNA contacts are provided by histidine 96, arginine 115, and lysine 161. The segment at serine 247–proline 281 adopts an FPG-type zinc-finger fold. The active-site Proton donor; for delta-elimination activity is the arginine 271.

This sequence belongs to the FPG family. As to quaternary structure, monomer. Requires Zn(2+) as cofactor.

The catalysed reaction is Hydrolysis of DNA containing ring-opened 7-methylguanine residues, releasing 2,6-diamino-4-hydroxy-5-(N-methyl)formamidopyrimidine.. The enzyme catalyses 2'-deoxyribonucleotide-(2'-deoxyribose 5'-phosphate)-2'-deoxyribonucleotide-DNA = a 3'-end 2'-deoxyribonucleotide-(2,3-dehydro-2,3-deoxyribose 5'-phosphate)-DNA + a 5'-end 5'-phospho-2'-deoxyribonucleoside-DNA + H(+). Functionally, involved in base excision repair of DNA damaged by oxidation or by mutagenic agents. Acts as a DNA glycosylase that recognizes and removes damaged bases. Has a preference for oxidized purines, such as 7,8-dihydro-8-oxoguanine (8-oxoG). Has AP (apurinic/apyrimidinic) lyase activity and introduces nicks in the DNA strand. Cleaves the DNA backbone by beta-delta elimination to generate a single-strand break at the site of the removed base with both 3'- and 5'-phosphates. This Rhodococcus erythropolis (strain PR4 / NBRC 100887) protein is Formamidopyrimidine-DNA glycosylase.